The following is a 462-amino-acid chain: Zinc transporter zipt-7.2 (462 aa).

The chain crosses the membrane as a helical span at residues 2-22 (LVKSCIFLSFLAIAAYGQAHL). The interval 39–134 (HHQGHGHAHG…HGHSHGAESA (96 aa)) is disordered. Over residues 40-51 (HQGHGHAHGGHG) the composition is skewed to basic residues. The span at 65–74 (AAAAEAATAA) shows a compositional bias: low complexity. The segment covering 75-94 (AHDHGHAHDHDHGHAHDHGH) has biased composition (basic and acidic residues). Basic residues predominate over residues 111 to 120 (HGHAHDHHGH). A compositionally biased stretch (basic and acidic residues) spans 121-132 (SHEDHGHSHGAE). The helical transmembrane segment at 161–181 (AISATLLISAAPCFILMFIPI) threads the bilayer. Asn-184 carries an N-linked (GlcNAc...) asparagine glycan. A helical transmembrane segment spans residues 194–214 (VLLAFGSGGLLGDAFLHLIPH). Residues 219–239 (GDGHGHSHSHGHSHGGGGHSH) form a disordered region. A helical transmembrane segment spans residues 244–264 (MSVGGWVLGGIIAFLTVEKLV). Residues 270–307 (EDGHGHSHGHSHGGEKKETKEKDSKDKVAKKEEKPEKD) form a disordered region. Basic and acidic residues predominate over residues 281–307 (HGGEKKETKEKDSKDKVAKKEEKPEKD). An N-linked (GlcNAc...) asparagine glycan is attached at Asn-326. The next 3 membrane-spanning stretches (helical) occupy residues 333–353 (IGAS…TVLV), 376–396 (AMLI…ISLF), and 410–430 (SWVL…SVIP). The N-linked (GlcNAc...) asparagine glycan is linked to Asn-435. The chain crosses the membrane as a helical span at residues 441 to 461 (TVKEIFAILTGIFLMYLIAIY).

It belongs to the ZIP transporter (TC 2.A.5) family. KE4/Catsup subfamily. As to expression, expressed in somatic tissues.

It localises to the membrane. In terms of biological role, zinc transporter. The chain is Zinc transporter zipt-7.2 from Caenorhabditis elegans.